The chain runs to 405 residues: Tryptophan synthase beta chain (405 aa).

Residue K98 is modified to N6-(pyridoxal phosphate)lysine.

Belongs to the TrpB family. In terms of assembly, tetramer of two alpha and two beta chains. Pyridoxal 5'-phosphate serves as cofactor.

The enzyme catalyses (1S,2R)-1-C-(indol-3-yl)glycerol 3-phosphate + L-serine = D-glyceraldehyde 3-phosphate + L-tryptophan + H2O. It participates in amino-acid biosynthesis; L-tryptophan biosynthesis; L-tryptophan from chorismate: step 5/5. Functionally, the beta subunit is responsible for the synthesis of L-tryptophan from indole and L-serine. The sequence is that of Tryptophan synthase beta chain from Xanthomonas axonopodis pv. citri (strain 306).